The following is a 214-amino-acid chain: Charged multivesicular body protein 2b-B (214 aa).

A coiled-coil region spans residues 25 to 55 (QRAITRDRAALEKQEKQLEMEIKKMAKTGNK). Positions 178–200 (MAKAPSAAKGLPSTSAAKSKGIS) are disordered. The short motif at 202–212 (EEIERQLKALG) is the MIT-interacting motif element.

The protein belongs to the SNF7 family. Probable core component of the endosomal sorting required for transport complex III (ESCRT-III). ESCRT-III components are thought to multimerize to form a flat lattice on the perimeter membrane of the endosome.

The protein localises to the cytoplasm. It is found in the cytosol. It localises to the late endosome membrane. Its function is as follows. Probable core component of the endosomal sorting required for transport complex III (ESCRT-III) which is involved in multivesicular bodies (MVBs) formation and sorting of endosomal cargo proteins into MVBs. MVBs contain intraluminal vesicles (ILVs) that are generated by invagination and scission from the limiting membrane of the endosome and mostly are delivered to lysosomes enabling degradation of membrane proteins, such as stimulated growth factor receptors, lysosomal enzymes and lipids. In Xenopus laevis (African clawed frog), this protein is Charged multivesicular body protein 2b-B (chmp2b-b).